Reading from the N-terminus, the 263-residue chain is Endonuclease 8 (263 aa).

Proline 2 acts as the Schiff-base intermediate with DNA in catalysis. The active-site Proton donor is glutamate 3. The active-site Proton donor; for beta-elimination activity is lysine 53. Positions 70, 125, and 169 each coordinate DNA. An FPG-type zinc finger spans residues 229–263 (KVFHRDGEACERCGGIIEKTTLSSRPFYWCPHCQK). Residue arginine 253 is the Proton donor; for delta-elimination activity of the active site.

The protein belongs to the FPG family. Zn(2+) serves as cofactor.

The catalysed reaction is 2'-deoxyribonucleotide-(2'-deoxyribose 5'-phosphate)-2'-deoxyribonucleotide-DNA = a 3'-end 2'-deoxyribonucleotide-(2,3-dehydro-2,3-deoxyribose 5'-phosphate)-DNA + a 5'-end 5'-phospho-2'-deoxyribonucleoside-DNA + H(+). In terms of biological role, involved in base excision repair of DNA damaged by oxidation or by mutagenic agents. Acts as a DNA glycosylase that recognizes and removes damaged bases. Has a preference for oxidized pyrimidines, such as thymine glycol, 5,6-dihydrouracil and 5,6-dihydrothymine. Has AP (apurinic/apyrimidinic) lyase activity and introduces nicks in the DNA strand. Cleaves the DNA backbone by beta-delta elimination to generate a single-strand break at the site of the removed base with both 3'- and 5'-phosphates. The sequence is that of Endonuclease 8 from Salmonella paratyphi B (strain ATCC BAA-1250 / SPB7).